Here is a 604-residue protein sequence, read N- to C-terminus: Cell division cycle protein CDT1 (604 aa).

This sequence belongs to the Cdt1 family. Associates with the MCM2-7 complex. Interacts with MCM2, ORC1, ORC2 and ORC6.

It localises to the cytoplasm. Its subcellular location is the nucleus. Its function is as follows. DNA replication licensing factor, required for pre-replication complex assembly. Faithful duplication of the genetic material requires 'once per cell cycle' DNA replication initiation and elongation. Central to this control is the tightly regulated formation of prereplicative complexes (preRCs) at future origins of DNA replication. Required for the recruitment of the MCM2-7 helicase complex to the replication origins. In Saccharomyces cerevisiae (strain ATCC 204508 / S288c) (Baker's yeast), this protein is Cell division cycle protein CDT1 (TAH11).